Reading from the N-terminus, the 293-residue chain is Glutamyl-Q tRNA(Asp) synthetase (293 aa).

L-glutamate contacts are provided by residues 8–12 and Glu-44; that span reads RFAPT. Positions 11–21 match the 'HIGH' region motif; that stretch reads PTPSGYLHFGS. Residues Cys-100, Cys-102, Tyr-114, and Cys-118 each contribute to the Zn(2+) site. Tyr-171 and Arg-189 together coordinate L-glutamate. Positions 227 to 231 match the 'KMSKS' region motif; it reads KLGKS. Lys-230 serves as a coordination point for ATP.

The protein belongs to the class-I aminoacyl-tRNA synthetase family. GluQ subfamily. Requires Zn(2+) as cofactor.

In terms of biological role, catalyzes the tRNA-independent activation of glutamate in presence of ATP and the subsequent transfer of glutamate onto a tRNA(Asp). Glutamate is transferred on the 2-amino-5-(4,5-dihydroxy-2-cyclopenten-1-yl) moiety of the queuosine in the wobble position of the QUC anticodon. The polypeptide is Glutamyl-Q tRNA(Asp) synthetase (Pseudomonas aeruginosa (strain LESB58)).